Here is a 283-residue protein sequence, read N- to C-terminus: Phytanoyl-CoA dioxygenase (283 aa).

Residues lysine 99, methionine 138, 153-155, and tryptophan 170 each bind 2-oxoglutarate; that span reads HQD. Fe cation contacts are provided by histidine 153 and aspartate 155. Histidine 238 contributes to the Fe cation binding site. Residues serine 240 and arginine 249 each contribute to the 2-oxoglutarate site.

Belongs to the PhyH family. The cofactor is Fe cation. Requires L-ascorbate as cofactor.

The enzyme catalyses phytanoyl-CoA + 2-oxoglutarate + O2 = 2-hydroxyphytanoyl-CoA + succinate + CO2. It participates in lipid metabolism; fatty acid metabolism. Functionally, converts phytanoyl-CoA to 2-hydroxyphytanoyl-CoA. This is Phytanoyl-CoA dioxygenase from Arabidopsis thaliana (Mouse-ear cress).